A 426-amino-acid polypeptide reads, in one-letter code: uncharacterized protein (426 aa).

The protein to M.leprae L518_C2_147 and M.tuberculosis Rv1524.

This is an uncharacterized protein from Mycobacterium tuberculosis (strain CDC 1551 / Oshkosh).